Consider the following 543-residue polypeptide: Pectate disaccharide-lyase (543 aa).

This sequence belongs to the polysaccharide lyase 2 family. Requires Cu cation as cofactor. Mn(2+) serves as cofactor. Ni(2+) is required as a cofactor.

The protein resides in the cytoplasm. It catalyses the reaction [(1-&gt;4)-alpha-D-galacturonosyl](n) = 4-(4-deoxy-alpha-D-galact-4-enuronosyl)-D-galacturonate + [(1-&gt;4)-alpha-D-galacturonosyl](n-2). It functions in the pathway glycan metabolism; pectin degradation. Catalyzes the formation of unsaturated digalacturonates from polygalacturonate or short oligogalacturonates. The sequence is that of Pectate disaccharide-lyase (pelW) from Dickeya dadantii (strain 3937) (Erwinia chrysanthemi (strain 3937)).